The chain runs to 228 residues: UPF0758 protein Reut_A2732 (228 aa).

The region spanning 102 to 224 is the MPN domain; sequence GLDSPAAVRS…VHSFAEHGEL (123 aa). Zn(2+)-binding residues include H173, H175, and D186. Residues 173 to 186 carry the JAMM motif motif; the sequence is HNHPSGCCTPSQSD.

This sequence belongs to the UPF0758 family.

The sequence is that of UPF0758 protein Reut_A2732 from Cupriavidus pinatubonensis (strain JMP 134 / LMG 1197) (Cupriavidus necator (strain JMP 134)).